The chain runs to 169 residues: Cytochrome c oxidase subunit 4 isoform 1, mitochondrial (169 aa).

The N-terminal 22 residues, 1–22 (MLATRVFSLVGKRAISTSVCVR), are a transit peptide targeting the mitochondrion. The Mitochondrial matrix segment spans residues 23–98 (AHESVVKSED…SFAEMNRGSN (76 aa)). An N6-acetyllysine; alternate modification is found at lysine 29. At lysine 29 the chain carries N6-succinyllysine; alternate. Lysine 53 is subject to N6-acetyllysine. Phosphoserine is present on residues serine 56 and serine 58. N6-acetyllysine; alternate is present on lysine 60. At lysine 60 the chain carries N6-succinyllysine; alternate. Lysine 67 carries the post-translational modification N6-acetyllysine. A helical transmembrane segment spans residues 99 to 124 (EWKTVVGGAMFFIGFTALVIMWQKHY). The Mitochondrial intermembrane segment spans residues 125 to 169 (VYGPLPQSFDKEWVAKQTKRMLDMKVNPIQGLASKWDYEKNEWKK).

This sequence belongs to the cytochrome c oxidase IV family. Component of the cytochrome c oxidase (complex IV, CIV), a multisubunit enzyme composed of 14 subunits. The complex is composed of a catalytic core of 3 subunits MT-CO1, MT-CO2 and MT-CO3, encoded in the mitochondrial DNA, and 11 supernumerary subunits COX4I1 (or COX4I2), COX5A, COX5B, COX6A1 (or COX6A2), COX6B1 (or COX6B2), COX6C, COX7A2 (or COX7A1), COX7B, COX7C, COX8A and NDUFA4, which are encoded in the nuclear genome. The complex exists as a monomer or a dimer and forms supercomplexes (SCs) in the inner mitochondrial membrane with NADH-ubiquinone oxidoreductase (complex I, CI) and ubiquinol-cytochrome c oxidoreductase (cytochrome b-c1 complex, complex III, CIII), resulting in different assemblies (supercomplex SCI(1)III(2)IV(1) and megacomplex MCI(2)III(2)IV(2)). Interacts with AFG1L. Interacts with PHB2; the interaction decreases in absence of SPHK2. Interacts with ABCB7; this interaction allows the regulation of cellular iron homeostasis and cellular reactive oxygen species (ROS) levels in cardiomyocytes. Interacts with FLVCR2; this interaction occurs in the absence of heme and is disrupted upon heme binding. Interacts with IRGC. As to expression, ubiquitous.

It is found in the mitochondrion inner membrane. Its pathway is energy metabolism; oxidative phosphorylation. Functionally, component of the cytochrome c oxidase, the last enzyme in the mitochondrial electron transport chain which drives oxidative phosphorylation. The respiratory chain contains 3 multisubunit complexes succinate dehydrogenase (complex II, CII), ubiquinol-cytochrome c oxidoreductase (cytochrome b-c1 complex, complex III, CIII) and cytochrome c oxidase (complex IV, CIV), that cooperate to transfer electrons derived from NADH and succinate to molecular oxygen, creating an electrochemical gradient over the inner membrane that drives transmembrane transport and the ATP synthase. Cytochrome c oxidase is the component of the respiratory chain that catalyzes the reduction of oxygen to water. Electrons originating from reduced cytochrome c in the intermembrane space (IMS) are transferred via the dinuclear copper A center (CU(A)) of subunit 2 and heme A of subunit 1 to the active site in subunit 1, a binuclear center (BNC) formed by heme A3 and copper B (CU(B)). The BNC reduces molecular oxygen to 2 water molecules using 4 electrons from cytochrome c in the IMS and 4 protons from the mitochondrial matrix. The protein is Cytochrome c oxidase subunit 4 isoform 1, mitochondrial of Homo sapiens (Human).